A 702-amino-acid chain; its full sequence is Transposon Tn7 transposition protein TnsB (702 aa).

A DNA-binding domain 1 (DBD1) region spans residues 1-139; the sequence is MWQINEVVLF…GQTPNALIPD (139 aa). The segment at residues 105–124 is a DNA-binding region (H-T-H motif); it reads VEHVVQEHKVTKATVYKLLR. Residues 137–160 are disordered; that stretch reads IPDYKNSGAPGERRSATGTAKIGR. The interval 140–172 is linker 1; sequence YKNSGAPGERRSATGTAKIGRAREYGKGEGTKV. The interval 173-233 is DNA-binding domain 2 (DBD2); that stretch reads TPEIERLFRL…QFRYFYDREY (61 aa). Residues 234–267 are linker 2; sequence PKAQRLKSRVKAGVYKKDVRPLSSTATSQALGPG. The Integrase catalytic domain occupies 262–480; that stretch reads QALGPGSRYE…IPVQLWQWGM (219 aa). Residues 268-582 are catalytic domain (CD); that stretch reads SRYEIDATIA…RSRQFKGLSF (315 aa). Residues 589-702 are C-terminal domain; it reads QAQEKHNKAN…FQDPPEKDES (114 aa). The interval 623 to 702 is disordered; sequence KLTPSTTEPK…FQDPPEKDES (80 aa).

In terms of assembly, heteromer with TnsA.

Functionally, sequence-specific, DNA-binding protein required for Tn7 transposition. Recognizes sequences necessary for recombination at both left and right ends of Tn7 and, together with TnsA, forms the transposase. TnsB executes the 3'-DNA strand breakage and joining reactions. TnsB binding introduces DNA bending. There are 3 DNA-binding sites in the left and 4 in the right end of Tn7; as TnsB levels increase more TnsB is bound, suggesting high protein levels contribute to transposon immunity. Binding of TnsB to the transposon right end represses expression of the downstream transposition genes. TnsABC + TnsD promote high-frequency insertion of Tn7 into a specific target site known as att-Tn7 whereas TnsABC + TnsE promote low-frequency insertion into many different sites. The sequence is that of Transposon Tn7 transposition protein TnsB from Escherichia coli.